Here is a 273-residue protein sequence, read N- to C-terminus: Chaperone protein PsaB (273 aa).

Positions 1–31 are cleaved as a signal peptide; that stretch reads MKNLFFSAYKKVFSYITSIVIFMVSLPYAYS. Cysteines 128 and 163 form a disulfide.

Belongs to the periplasmic pilus chaperone family.

It is found in the periplasm. Functionally, required for the biogenesis of the pH 6 antigen. The chain is Chaperone protein PsaB (psaB) from Yersinia pestis.